The chain runs to 466 residues: Asparagine--tRNA ligase (466 aa).

It belongs to the class-II aminoacyl-tRNA synthetase family. In terms of assembly, homodimer.

It is found in the cytoplasm. It catalyses the reaction tRNA(Asn) + L-asparagine + ATP = L-asparaginyl-tRNA(Asn) + AMP + diphosphate + H(+). This Shewanella loihica (strain ATCC BAA-1088 / PV-4) protein is Asparagine--tRNA ligase.